Here is a 149-residue protein sequence, read N- to C-terminus: Nucleoside diphosphate kinase (149 aa).

6 residues coordinate ATP: K9, F57, R85, T91, R102, and N112. The active-site Pros-phosphohistidine intermediate is H115.

The protein belongs to the NDK family. Mg(2+) serves as cofactor.

The protein resides in the cytoplasm. The catalysed reaction is a 2'-deoxyribonucleoside 5'-diphosphate + ATP = a 2'-deoxyribonucleoside 5'-triphosphate + ADP. It carries out the reaction a ribonucleoside 5'-diphosphate + ATP = a ribonucleoside 5'-triphosphate + ADP. In terms of biological role, major role in the synthesis of nucleoside triphosphates other than ATP. The ATP gamma phosphate is transferred to the NDP beta phosphate via a ping-pong mechanism, using a phosphorylated active-site intermediate. This chain is Nucleoside diphosphate kinase, found in Methanosarcina barkeri (strain Fusaro / DSM 804).